The sequence spans 290 residues: Acetyl-coenzyme A carboxylase carboxyl transferase subunit beta (290 aa).

Positions 28 to 290 constitute a CoA carboxyltransferase N-terminal domain; that stretch reads IMTKCPKCKK…TGGEYEWLQD (263 aa). 4 residues coordinate Zn(2+): Cys-32, Cys-35, Cys-51, and Cys-54. A C4-type zinc finger spans residues 32 to 54; the sequence is CPKCKKIMLTKELDKNLRVCMNC.

Belongs to the AccD/PCCB family. In terms of assembly, acetyl-CoA carboxylase is a heterohexamer composed of biotin carboxyl carrier protein (AccB), biotin carboxylase (AccC) and two subunits each of ACCase subunit alpha (AccA) and ACCase subunit beta (AccD). It depends on Zn(2+) as a cofactor.

The protein resides in the cytoplasm. It carries out the reaction N(6)-carboxybiotinyl-L-lysyl-[protein] + acetyl-CoA = N(6)-biotinyl-L-lysyl-[protein] + malonyl-CoA. It functions in the pathway lipid metabolism; malonyl-CoA biosynthesis; malonyl-CoA from acetyl-CoA: step 1/1. Its function is as follows. Component of the acetyl coenzyme A carboxylase (ACC) complex. Biotin carboxylase (BC) catalyzes the carboxylation of biotin on its carrier protein (BCCP) and then the CO(2) group is transferred by the transcarboxylase to acetyl-CoA to form malonyl-CoA. This Bacillus velezensis (strain DSM 23117 / BGSC 10A6 / LMG 26770 / FZB42) (Bacillus amyloliquefaciens subsp. plantarum) protein is Acetyl-coenzyme A carboxylase carboxyl transferase subunit beta.